We begin with the raw amino-acid sequence, 289 residues long: MKSGFISLIGRTNAGKSSLLNYLLNEKISMVSHKQNATRRKINGIVMHKDSQAIFIDTPGLHESNKTMNKLMVEAAIKSIGDCDLLLFVASVFDNIENYKKFLNLKKDAPHLIAITKIDEASDKEIFAKLNEYQIYSDEFKAIIPLSVKKQAYKNILLDEIYKYLPEHEYFYDPQYLTTANEREIFRDFILEAVYECVSDEVPYSTDVNVDKVVEKQNITEIYATIITDNEHHKAILIGKNGQTIKRIGINARKIINTLLNNKIFLKINVKIDKNWNSNESIIKKNFLY.

One can recognise an Era-type G domain in the interval 2 to 167 (KSGFISLIGR…LDEIYKYLPE (166 aa)). The tract at residues 10-17 (GRTNAGKS) is G1. Position 10-17 (10-17 (GRTNAGKS)) interacts with GTP. The interval 36–40 (NATRR) is G2. The interval 57-60 (DTPG) is G3. Residues 57–61 (DTPGL) and 116–119 (TKID) contribute to the GTP site. The tract at residues 116–119 (TKID) is G4. The G5 stretch occupies residues 146–148 (LSV). The KH type-2 domain occupies 198–274 (VSDEVPYSTD…FLKINVKIDK (77 aa)).

The protein belongs to the TRAFAC class TrmE-Era-EngA-EngB-Septin-like GTPase superfamily. Era GTPase family. In terms of assembly, monomer.

Its subcellular location is the cytoplasm. The protein localises to the cell inner membrane. Functionally, an essential GTPase that binds both GDP and GTP, with rapid nucleotide exchange. Plays a role in 16S rRNA processing and 30S ribosomal subunit biogenesis and possibly also in cell cycle regulation and energy metabolism. The polypeptide is GTPase Era (Campylobacter fetus subsp. fetus (strain 82-40)).